A 3583-amino-acid polypeptide reads, in one-letter code: Surfactin synthase subunit 2 (3583 aa).

3 Carrier domains span residues 965–1039 (APKT…EENE), 2005–2080 (APET…EASA), and 3034–3108 (APTT…ERAE). O-(pantetheine 4'-phosphoryl)serine occurs at positions 999, 2040, and 3069.

Belongs to the ATP-dependent AMP-binding enzyme family. Pantetheine 4'-phosphate serves as cofactor.

The protein operates within antibiotic biosynthesis; surfactin biosynthesis. Functionally, this protein is a multifunctional enzyme able to activate and polymerize the amino acids Leu, Glu, Asp and Val. Activation sites for these AA consist of individual domains. This chain is Surfactin synthase subunit 2 (srfAB), found in Bacillus subtilis (strain 168).